The sequence spans 230 residues: Orotidine 5'-phosphate decarboxylase (230 aa).

Residues aspartate 10, lysine 32, aspartate 59–threonine 68, threonine 119, arginine 180, glutamine 189, glycine 209, and arginine 210 each bind substrate. Lysine 61 (proton donor) is an active-site residue.

It belongs to the OMP decarboxylase family. Type 1 subfamily. In terms of assembly, homodimer.

It catalyses the reaction orotidine 5'-phosphate + H(+) = UMP + CO2. The protein operates within pyrimidine metabolism; UMP biosynthesis via de novo pathway; UMP from orotate: step 2/2. Catalyzes the decarboxylation of orotidine 5'-monophosphate (OMP) to uridine 5'-monophosphate (UMP). The polypeptide is Orotidine 5'-phosphate decarboxylase (Haemophilus ducreyi (strain 35000HP / ATCC 700724)).